The sequence spans 135 residues: Putative hydrolase EbsB (135 aa).

In terms of domain architecture, RNase H type-1 spans 1 to 128 (MLRIYVDAAT…ADMLARQALQ (128 aa)). Residues D7, E45, D71, and D120 each contribute to the Mg(2+) site.

The protein belongs to the RNase H family. EbsB subfamily. Mg(2+) serves as cofactor.

It localises to the secreted. The protein localises to the cell wall. Seems to play some role in the cell surface expression of a chromosomally encoded receptor, named enterococcal binding substance (EBS), that mediates mating aggregate formation. Might interfere with the synthesis or assembly of EBS and function as a cell wall hydrolase. The sequence is that of Putative hydrolase EbsB from Enterococcus faecalis (strain ATCC 700802 / V583).